The following is a 726-amino-acid chain: Type VI secretion system spike protein VgrG1c (726 aa).

Positions 502–522 are disordered; it reads ANATQSGTKSRSSKGGTPANF. A compositionally biased stretch (low complexity) spans 507–518; that stretch reads SGTKSRSSKGGT.

It belongs to the VgrG protein family. In terms of assembly, forms homomultimers. Part of the type VI secretion system (T6SS).

It localises to the secreted. In terms of biological role, part of the H1 type VI secretion system (H1-T6SS) specialized secretion system, which delivers several virulence factors in both prokaryotic and eukaryotic cells during infection. Allows the delivery of the Tse5/RhsP1 toxin to target cells where it exerts its toxicity. In Pseudomonas aeruginosa (strain ATCC 15692 / DSM 22644 / CIP 104116 / JCM 14847 / LMG 12228 / 1C / PRS 101 / PAO1), this protein is Type VI secretion system spike protein VgrG1c.